We begin with the raw amino-acid sequence, 905 residues long: Protein translocase subunit SecA (905 aa).

ATP-binding positions include Q87, 105–109, and D512; that span reads GEGKT. The tract at residues 840-905 is disordered; the sequence is AQRQQEAMAQ…HCHGSKARYA (66 aa). The segment covering 843 to 852 has biased composition (low complexity); sequence QQEAMAQAES. A compositionally biased stretch (basic and acidic residues) spans 853-862; the sequence is ENYRTADHQA. Positions 863 to 874 are enriched in polar residues; that stretch reads EAQQSESLTEEQ. Positions 886, 888, 897, and 898 each coordinate Zn(2+). Residues 892–905 are compositionally biased toward basic residues; that stretch reads KKYKHCHGSKARYA.

The protein belongs to the SecA family. Monomer and homodimer. Part of the essential Sec protein translocation apparatus which comprises SecA, SecYEG and auxiliary proteins SecDF-YajC and YidC. Requires Zn(2+) as cofactor.

It is found in the cell inner membrane. It localises to the cytoplasm. The enzyme catalyses ATP + H2O + cellular proteinSide 1 = ADP + phosphate + cellular proteinSide 2.. Functionally, part of the Sec protein translocase complex. Interacts with the SecYEG preprotein conducting channel. Has a central role in coupling the hydrolysis of ATP to the transfer of proteins into and across the cell membrane, serving both as a receptor for the preprotein-SecB complex and as an ATP-driven molecular motor driving the stepwise translocation of polypeptide chains across the membrane. The polypeptide is Protein translocase subunit SecA (Actinobacillus pleuropneumoniae serotype 3 (strain JL03)).